An 887-amino-acid polypeptide reads, in one-letter code: 3-hydroxy-3-methylglutaryl-coenzyme A reductase (887 aa).

Residues 1–9 are Cytoplasmic-facing; sequence MLSRLFRMH. The chain crosses the membrane as a helical span at residues 10–39; that stretch reads GLFVASHPWEVIVGTVTLTICMMSMNMFTG. Residues 40–56 lie on the Lumenal side of the membrane; the sequence is NNKICGWNYECPKFEED. Residues 57–78 form a helical membrane-spanning segment; the sequence is VLSSDIIILTITRCIAILYIYF. One can recognise an SSD domain in the interval 61–218; sequence DIIILTITRC…MTFFPACVSL (158 aa). Residues 75–78 carry the INSIG-binding motif motif; sequence YIYF. At 79–89 the chain is on the cytoplasmic side; that stretch reads QFQNLRQLGSK. A Glycyl lysine isopeptide (Lys-Gly) (interchain with G-Cter in ubiquitin) cross-link involves residue lysine 89. A helical membrane pass occupies residues 90 to 114; it reads YILGIAGLFTIFSSFVFSTVVIHFL. Residues 115-123 lie on the Lumenal side of the membrane; that stretch reads DKELTGLNE. The helical transmembrane segment at 124 to 149 threads the bilayer; it reads ALPFFLLLIDLSRASALAKFALSSNS. The Cytoplasmic portion of the chain corresponds to 150–159; that stretch reads QDEVRENIAR. A helical membrane pass occupies residues 160-187; that stretch reads GMAILGPTFTLDALVECLVIGVGTMSGV. The Lumenal segment spans residues 188 to 191; the sequence is RQLE. A helical transmembrane segment spans residues 192 to 220; that stretch reads IMCCFGCMSVLANYFVFMTFFPACVSLVL. At 221-248 the chain is on the cytoplasmic side; it reads ELSRESREGRPIWQLSHFARVLEEEENK. A Glycyl lysine isopeptide (Lys-Gly) (interchain with G-Cter in ubiquitin) cross-link involves residue lysine 248. Residues 249-275 form a helical membrane-spanning segment; the sequence is PNPVTQRVKMIMSLGLVLVHAHSRWIA. Over 276–314 the chain is Lumenal; it reads DPSPQNSTTEHSKVSLGLDEDVSKRIEPSVSLWQFYLSK. Asparagine 281 is a glycosylation site (N-linked (GlcNAc...) asparagine). Residues 315 to 339 form a helical membrane-spanning segment; that stretch reads MISMDIEQVVTLSLAFLLAVKYIFF. The Cytoplasmic segment spans residues 340 to 887; it reads EQAETESTLS…LQGTCTKKAA (548 aa). Catalysis depends on charge relay system residues glutamate 558, lysine 690, and aspartate 766. Histidine 865 (proton donor) is an active-site residue. Residue serine 871 is modified to Phosphoserine; by AMPK.

This sequence belongs to the HMG-CoA reductase family. Homotetramer. Homodimer. Interacts (via its SSD) with INSIG1; the interaction, accelerated by sterols, leads to the recruitment of HMGCR to AMFR/gp78 for its ubiquitination by the sterol-mediated ERAD pathway. Interacts with UBIAD1. In terms of processing, undergoes sterol-mediated ubiquitination and ER-associated degradation (ERAD). Accumulation of sterols in the endoplasmic reticulum (ER) membrane, triggers binding of the reductase to the ER membrane protein INSIG1 or INSIG2. The INSIG1 binding leads to the recruitment of the ubiquitin ligase, AMFR/gp78, RNF139 or RNF145, initiating ubiquitination of the reductase. The ubiquitinated reductase is then extracted from the ER membrane and delivered to cytosolic 26S proteosomes by a mechanism probably mediated by the ATPase Valosin-containing protein VCP/p97. The INSIG2-binding leads to the recruitment of the ubiquitin ligase RNF139, initiating ubiquitination of the reductase. Lys-248 is the main site of ubiquitination. Ubiquitination is enhanced by the presence of a geranylgeranylated protein. N-glycosylated. Deglycosylated by NGLY1 on release from the endoplasmic reticulum (ER) in a sterol-mediated manner. Post-translationally, phosphorylated. Phosphorylation at Ser-871 reduces the catalytic activity.

It is found in the endoplasmic reticulum membrane. It localises to the peroxisome membrane. The catalysed reaction is (R)-mevalonate + 2 NADP(+) + CoA = (3S)-3-hydroxy-3-methylglutaryl-CoA + 2 NADPH + 2 H(+). Its pathway is metabolic intermediate biosynthesis; (R)-mevalonate biosynthesis; (R)-mevalonate from acetyl-CoA: step 3/3. Regulated by a negative feedback mechanism through sterols and non-sterol metabolites derived from mevalonate. Phosphorylation at Ser-871 down-regulates the catalytic activity. Its function is as follows. Catalyzes the conversion of (3S)-hydroxy-3-methylglutaryl-CoA (HMG-CoA) to mevalonic acid, the rate-limiting step in the synthesis of cholesterol and other isoprenoids, thus plays a critical role in cellular cholesterol homeostasis. The sequence is that of 3-hydroxy-3-methylglutaryl-coenzyme A reductase (HMGCR) from Mesocricetus auratus (Golden hamster).